Consider the following 142-residue polypeptide: Large ribosomal subunit protein uL11 (142 aa).

This sequence belongs to the universal ribosomal protein uL11 family. In terms of assembly, part of the ribosomal stalk of the 50S ribosomal subunit. Interacts with L10 and the large rRNA to form the base of the stalk. L10 forms an elongated spine to which L12 dimers bind in a sequential fashion forming a multimeric L10(L12)X complex. In terms of processing, one or more lysine residues are methylated.

Forms part of the ribosomal stalk which helps the ribosome interact with GTP-bound translation factors. The polypeptide is Large ribosomal subunit protein uL11 (Citrobacter koseri (strain ATCC BAA-895 / CDC 4225-83 / SGSC4696)).